The following is a 290-amino-acid chain: Translin-associated protein X (290 aa).

Positions 1–31 are disordered; it reads MNGKEGPGGFRKRKHDTFPHNQRREGKDASL. Over residues 16 to 28 the composition is skewed to basic and acidic residues; it reads DTFPHNQRREGKD. The tract at residues 73 to 208 is interaction with C1D; sequence LLHRITSAPD…MRMCINSVGN (136 aa). Residues E129 and E197 each coordinate Mg(2+). K279 is covalently cross-linked (Glycyl lysine isopeptide (Lys-Gly) (interchain with G-Cter in SUMO2)).

It belongs to the translin family. Ring-shaped heterooctamer of six TSN and two TSNAX subunits. Interacts with GOLGA3, TSNAXIP1, SUN1 and AKAP9. Interacts with the homodimeric form of C1D following gamma-radiation. Interacts with TSN and C1D in a mutually exclusive manner. Sumoylated with SUMO1. In terms of tissue distribution, detected in heart, brain, lung, liver, kidney and testis.

It localises to the cytoplasm. The protein resides in the perinuclear region. It is found in the golgi apparatus. The protein localises to the nucleus. Functionally, acts in combination with TSN as an endonuclease involved in the activation of the RNA-induced silencing complex (RISC). Possible role in spermatogenesis. This Mus musculus (Mouse) protein is Translin-associated protein X (Tsnax).